The primary structure comprises 204 residues: Lipid A acyltransferase PagP (204 aa).

Residues 1 to 25 (MSYKHLISACIFSSLCLGQVNAVLA) form the signal peptide. Catalysis depends on residues histidine 76, aspartate 119, and serine 120.

This sequence belongs to the lipid A palmitoyltransferase family. Homodimer.

It localises to the cell outer membrane. The catalysed reaction is a lipid A + a 1,2-diacyl-sn-glycero-3-phosphocholine = a hepta-acyl lipid A + a 2-acyl-sn-glycero-3-phosphocholine. The enzyme catalyses a lipid IVA + a 1,2-diacyl-sn-glycero-3-phosphocholine = a lipid IVB + a 2-acyl-sn-glycero-3-phosphocholine. It catalyses the reaction a lipid IIA + a 1,2-diacyl-sn-glycero-3-phosphocholine = a lipid IIB + a 2-acyl-sn-glycero-3-phosphocholine. Its function is as follows. Transfers a fatty acid residue from the sn-1 position of a phospholipid to the N-linked hydroxyfatty acid chain on the proximal unit of lipid A or its precursors. In Yersinia enterocolitica serotype O:8 / biotype 1B (strain NCTC 13174 / 8081), this protein is Lipid A acyltransferase PagP.